A 217-amino-acid chain; its full sequence is Probable cutinase 3 (217 aa).

A signal peptide spans 1 to 17 (MSLRSLFVAGLATLALA). Cystine bridges form between C39-C118 and C65-C79. S129 functions as the Nucleophile in the catalytic mechanism. A disulfide bridge connects residues C180 and C187. The active site involves D184. The active-site Proton donor/acceptor is H197.

This sequence belongs to the cutinase family.

It is found in the secreted. It carries out the reaction cutin + H2O = cutin monomers.. Its function is as follows. Catalyzes the hydrolysis of complex carboxylic polyesters found in the cell wall of plants. Degrades cutin, a macromolecule that forms the structure of the plant cuticle. The sequence is that of Probable cutinase 3 from Neosartorya fischeri (strain ATCC 1020 / DSM 3700 / CBS 544.65 / FGSC A1164 / JCM 1740 / NRRL 181 / WB 181) (Aspergillus fischerianus).